Consider the following 330-residue polypeptide: uncharacterized protein (330 aa).

The protein belongs to the ornithine cyclodeaminase/mu-crystallin family.

Its subcellular location is the cytoplasm. This is an uncharacterized protein from Schizosaccharomyces pombe (strain 972 / ATCC 24843) (Fission yeast).